An 83-amino-acid chain; its full sequence is Mu-theraphotoxin-Hhn2p (83 aa).

The first 21 residues, 1–21 (MKASMYLALAGLVLLFVVGYA), serve as a signal peptide directing secretion. Positions 22-48 (SESEEKEFPRELLSKIFAVDDFKGEER) are excised as a propeptide. Disulfide bonds link C50–C65, C57–C70, and C64–C77. A Leucine amide modification is found at L81.

Belongs to the neurotoxin 10 (Hwtx-1) family. 15 (Hntx-3) subfamily. Monomer. Expressed by the venom gland.

It is found in the secreted. Lethal neurotoxin. Selectively blocks tetrodotoxin-sensitive voltage-gated sodium channels (Nav). Does not affect tetrodotoxin-resistant voltage-gated sodium channels or calcium channels. The protein is Mu-theraphotoxin-Hhn2p of Cyriopagopus hainanus (Chinese bird spider).